The sequence spans 112 residues: Large ribosomal subunit protein bL17 (112 aa).

Belongs to the bacterial ribosomal protein bL17 family. As to quaternary structure, part of the 50S ribosomal subunit. Contacts protein L32.

The sequence is that of Large ribosomal subunit protein bL17 from Caldanaerobacter subterraneus subsp. tengcongensis (strain DSM 15242 / JCM 11007 / NBRC 100824 / MB4) (Thermoanaerobacter tengcongensis).